Consider the following 331-residue polypeptide: Glycerol-3-phosphate dehydrogenase [NAD(P)+] (331 aa).

The NADPH site is built by Ser11, Phe12, Arg32, and Lys106. Positions 106, 134, and 136 each coordinate sn-glycerol 3-phosphate. Position 138 (Ala138) interacts with NADPH. Residues Lys189, Asp242, Ser252, Arg253, and Asn254 each contribute to the sn-glycerol 3-phosphate site. The active-site Proton acceptor is Lys189. Arg253 serves as a coordination point for NADPH. NADPH is bound by residues Val277 and Glu279.

It belongs to the NAD-dependent glycerol-3-phosphate dehydrogenase family.

The protein localises to the cytoplasm. The catalysed reaction is sn-glycerol 3-phosphate + NAD(+) = dihydroxyacetone phosphate + NADH + H(+). It catalyses the reaction sn-glycerol 3-phosphate + NADP(+) = dihydroxyacetone phosphate + NADPH + H(+). It participates in membrane lipid metabolism; glycerophospholipid metabolism. Its function is as follows. Catalyzes the reduction of the glycolytic intermediate dihydroxyacetone phosphate (DHAP) to sn-glycerol 3-phosphate (G3P), the key precursor for phospholipid synthesis. The polypeptide is Glycerol-3-phosphate dehydrogenase [NAD(P)+] (Clostridium perfringens (strain ATCC 13124 / DSM 756 / JCM 1290 / NCIMB 6125 / NCTC 8237 / Type A)).